Here is a 160-residue protein sequence, read N- to C-terminus: tRNA (cytidine(34)-2'-O)-methyltransferase (160 aa).

4 residues coordinate S-adenosyl-L-methionine: Leu78, Gly100, Ile122, and Ser130.

It belongs to the class IV-like SAM-binding methyltransferase superfamily. RNA methyltransferase TrmH family. TrmL subfamily. As to quaternary structure, homodimer.

It localises to the cytoplasm. The catalysed reaction is cytidine(34) in tRNA + S-adenosyl-L-methionine = 2'-O-methylcytidine(34) in tRNA + S-adenosyl-L-homocysteine + H(+). The enzyme catalyses 5-carboxymethylaminomethyluridine(34) in tRNA(Leu) + S-adenosyl-L-methionine = 5-carboxymethylaminomethyl-2'-O-methyluridine(34) in tRNA(Leu) + S-adenosyl-L-homocysteine + H(+). Its function is as follows. Methylates the ribose at the nucleotide 34 wobble position in the two leucyl isoacceptors tRNA(Leu)(CmAA) and tRNA(Leu)(cmnm5UmAA). Catalyzes the methyl transfer from S-adenosyl-L-methionine to the 2'-OH of the wobble nucleotide. The polypeptide is tRNA (cytidine(34)-2'-O)-methyltransferase (Haemophilus influenzae (strain ATCC 51907 / DSM 11121 / KW20 / Rd)).